The sequence spans 173 residues: Calcium-binding protein 5 (173 aa).

EF-hand domains lie at 28–63 (DELDELREAFLEFDKDQDGFISYKDLGNLMRTMGYM), 82–99 (GRVDFEDFVELMTPKLLA), 105–140 (IGVQEMRDAFKEFDANGDGEITLAELQQAMQRLLGE), and 142–173 (LTPREIAEVVQEADINGDGTVDFEEFVKMMSR). Asp41, Asp43, Asp45, and Asp52 together coordinate Ca(2+). Ca(2+) is bound by residues Asp118, Asn120, Asp122, Glu124, Glu129, Asp155, Asn157, Asp159, Thr161, and Glu166.

Interacts with CACNA1C (via C-terminal CDB motif) in a calcium-dependent manner. Interacts with STXBP1. Interacts with MYO6. As to expression, expressed in inner and outer plexiform layers of the retina, and retinal bipolar cells (at protein level). Expressed in the inner hair cells (IHC) of the cochlea.

The protein resides in the cytoplasm. In terms of biological role, inhibits calcium-dependent inactivation of L-type calcium channel and shifts voltage dependence of activation to more depolarized membrane potentials. Involved in the transmission of light signals. May positively regulate neurotransmitter vesicle endocytosis and exocytosis in a salt-dependent manner. May play a role in the extension and network organization of neurites. The protein is Calcium-binding protein 5 (Cabp5) of Mus musculus (Mouse).